Consider the following 111-residue polypeptide: Protein BEX3 (111 aa).

The tract at residues 1-63 is disordered; sequence MANIHQENEE…RQINDGMGGD (63 aa). Positions 68–93 are interaction with p75NTR/NGFR; that stretch reads EIFMEEMREIRRKLRELQLRNCLRIL. Residues 68 to 111 are interaction with 14-3-3 epsilon; sequence EIFMEEMREIRRKLRELQLRNCLRILMGELSNHHDHHDEFCLMP. Positions 77–87 match the Nuclear export signal motif; sequence IRRKLRELQLR. Positions 100–104 are his cluster; the sequence is HHDHH. Cys108 contacts Zn(2+).

The protein belongs to the BEX family. As to quaternary structure, self-associates. Binds to the DEATH domain of p75NTR/NGFR. Interacts with 14-3-3 epsilon (YWHAE). Interacts with DIABLO/SMAC. In terms of processing, ubiquitinated. Degraded by the proteasome. As to expression, found in ovarian granulosa cells, testis, prostate and seminal vesicle tissue. High levels also detected in liver.

The protein localises to the nucleus. Its subcellular location is the cytoplasm. The protein resides in the cytosol. Functionally, may be a signaling adapter molecule involved in NGFR/p75NTR-mediated apoptosis induced by NGF. Plays a role in zinc-triggered neuronal death. In absence of reductive stress, acts as a pseudosubstrate for the CRL2(FEM1B) complex: associates with FEM1B via zinc, thereby preventing association between FEM1B and its substrates. The protein is Protein BEX3 of Homo sapiens (Human).